A 117-amino-acid chain; its full sequence is Prefoldin subunit beta (117 aa).

Belongs to the prefoldin subunit beta family. Heterohexamer of two alpha and four beta subunits.

It localises to the cytoplasm. Molecular chaperone capable of stabilizing a range of proteins. Seems to fulfill an ATP-independent, HSP70-like function in archaeal de novo protein folding. This is Prefoldin subunit beta from Methanococcoides burtonii (strain DSM 6242 / NBRC 107633 / OCM 468 / ACE-M).